The chain runs to 199 residues: Recombination protein RecR (199 aa).

The C4-type zinc-finger motif lies at 58-73 (CSVCFTLSDTPVCAIC). In terms of domain architecture, Toprim spans 81-176 (SLLCVVEGPT…TVTRIASGMP (96 aa)).

The protein belongs to the RecR family.

Functionally, may play a role in DNA repair. It seems to be involved in an RecBC-independent recombinational process of DNA repair. It may act with RecF and RecO. The chain is Recombination protein RecR from Desulfosudis oleivorans (strain DSM 6200 / JCM 39069 / Hxd3) (Desulfococcus oleovorans).